A 193-amino-acid chain; its full sequence is Ribosome maturation factor RimM (193 aa).

A PRC barrel domain is found at 112–193 (VDEYYWIDLI…CITVDWGLDF (82 aa)).

This sequence belongs to the RimM family. As to quaternary structure, binds ribosomal protein uS19.

It is found in the cytoplasm. An accessory protein needed during the final step in the assembly of 30S ribosomal subunit, possibly for assembly of the head region. Essential for efficient processing of 16S rRNA. May be needed both before and after RbfA during the maturation of 16S rRNA. It has affinity for free ribosomal 30S subunits but not for 70S ribosomes. The chain is Ribosome maturation factor RimM from Methylibium petroleiphilum (strain ATCC BAA-1232 / LMG 22953 / PM1).